A 407-amino-acid polypeptide reads, in one-letter code: Probable tRNA sulfurtransferase (407 aa).

The 105-residue stretch at 61–165 (NEITYRLSKI…LDAIYMYEEV (105 aa)) folds into the THUMP domain. Residues 183–184 (ML), 208–209 (HF), Arg-265, Gly-287, and Gln-296 contribute to the ATP site.

This sequence belongs to the ThiI family.

Its subcellular location is the cytoplasm. It catalyses the reaction [ThiI sulfur-carrier protein]-S-sulfanyl-L-cysteine + a uridine in tRNA + 2 reduced [2Fe-2S]-[ferredoxin] + ATP + H(+) = [ThiI sulfur-carrier protein]-L-cysteine + a 4-thiouridine in tRNA + 2 oxidized [2Fe-2S]-[ferredoxin] + AMP + diphosphate. The enzyme catalyses [ThiS sulfur-carrier protein]-C-terminal Gly-Gly-AMP + S-sulfanyl-L-cysteinyl-[cysteine desulfurase] + AH2 = [ThiS sulfur-carrier protein]-C-terminal-Gly-aminoethanethioate + L-cysteinyl-[cysteine desulfurase] + A + AMP + 2 H(+). The protein operates within cofactor biosynthesis; thiamine diphosphate biosynthesis. Functionally, catalyzes the ATP-dependent transfer of a sulfur to tRNA to produce 4-thiouridine in position 8 of tRNAs, which functions as a near-UV photosensor. Also catalyzes the transfer of sulfur to the sulfur carrier protein ThiS, forming ThiS-thiocarboxylate. This is a step in the synthesis of thiazole, in the thiamine biosynthesis pathway. The sulfur is donated as persulfide by IscS. This chain is Probable tRNA sulfurtransferase, found in Staphylococcus aureus (strain N315).